Consider the following 199-residue polypeptide: MILNAKFLISASKIDEAPQPIYTEIAFLGRSNVGKSSLINTLCKNKNLAKSSSTPGKTQLINFFEVDCKKDEDKFKLIFIDLPGFGYAKVSKKTKAIWNKNLDEFLKERSSIKLFIHLIDSRHENLDIDLNLDLYLDSFIRADQKKITVFTKADKLNQSQKAKLLNANKNAILVSNLKKSGIDKLEQKIILESLGFNEE.

Residues Ile-21–Gly-195 enclose the EngB-type G domain. GTP contacts are provided by residues Gly-29–Ser-36, Gly-56–Leu-60, Asp-81–Gly-84, Thr-151–Asp-154, and Val-174–Asn-176. Mg(2+)-binding residues include Ser-36 and Thr-58.

This sequence belongs to the TRAFAC class TrmE-Era-EngA-EngB-Septin-like GTPase superfamily. EngB GTPase family. The cofactor is Mg(2+).

Necessary for normal cell division and for the maintenance of normal septation. This is Probable GTP-binding protein EngB from Campylobacter lari (strain RM2100 / D67 / ATCC BAA-1060).